The following is a 514-amino-acid chain: JmjC domain-containing histone demethylation protein 1 (514 aa).

Residues 4-62 form a PHD-type zinc finger; that stretch reads IDTCPICVESPLEDSTTFNNIAWLQCDICNQWFHASCLKIPKIEVNNLHSYHCEGCSKS. The JmjC domain occupies 220–384; the sequence is SDVDSFGKSF…MHLRIYEIEK (165 aa). Thr267 provides a ligand contact to substrate. Fe cation contacts are provided by His270 and Asp272. Residue Lys287 coordinates substrate. His352 contributes to the Fe cation binding site. A compositionally biased stretch (basic and acidic residues) spans 432 to 454; the sequence is KSEAHSRGEVHTKTETHAVKDEP. Residues 432–456 are disordered; that stretch reads KSEAHSRGEVHTKTETHAVKDEPQP.

This sequence belongs to the JHDM1 histone demethylase family. Requires Fe(2+) as cofactor.

It localises to the nucleus. The enzyme catalyses N(6),N(6)-dimethyl-L-lysyl(36)-[histone H3] + 2 2-oxoglutarate + 2 O2 = L-lysyl(36)-[histone H3] + 2 formaldehyde + 2 succinate + 2 CO2. Its function is as follows. Histone demethylase that specifically demethylates 'Lys-36' of histone H3, thereby playing a central role in histone code. In Debaryomyces hansenii (strain ATCC 36239 / CBS 767 / BCRC 21394 / JCM 1990 / NBRC 0083 / IGC 2968) (Yeast), this protein is JmjC domain-containing histone demethylation protein 1 (JHD1).